The chain runs to 466 residues: Acetylcholine-gated chloride channel subunit acc-1 (466 aa).

The signal sequence occupies residues 1 to 24 (MSHPGWIMVSFLTELLSQSSKGIA). The Extracellular portion of the chain corresponds to 25–242 (QSLDNCANDT…FVFERRYGWY (218 aa)). Residues N32, N102, and N143 are each glycosylated (N-linked (GlcNAc...) asparagine). The cysteines at positions 158 and 172 are disulfide-linked. N-linked (GlcNAc...) asparagine glycosylation occurs at N211. The helical transmembrane segment at 243-263 (VLQGYIPTMVTIVISWISFYL) threads the bilayer. Topologically, residues 264-272 (GPRAIPART) are cytoplasmic. A helical membrane pass occupies residues 273–290 (MLGVNSLLAMTFQFGNII). Topologically, residues 291-304 (RNLPRVSYVKAIDV) are extracellular. A helical transmembrane segment spans residues 305 to 325 (WMLSGMLFIFLSLLELAVVGF). Residues 326–427 (MSRNEGLPPK…MRELRPETVD (102 aa)) are Cytoplasmic-facing. The tract at residues 333 to 352 (PPKVKKRKRQEDDDEGFSWK) is disordered. Residues 428–448 (FYSAIFFPTAYMLFNISYWSF) traverse the membrane as a helical segment. Residues 449-466 (YLTSLSEYFDEDVNIDQP) lie on the Extracellular side of the membrane.

Belongs to the ligand-gated ion channel (TC 1.A.9) family. Homopentamer (in vitro). Forms heteropentamers composed of acc-1 and acc-4 or acc-1 and acc-3. Both homopentamers and heteropentamers form functional ion channels. As to expression, expressed in a subset of cholinergic motor neurons including cholinergic motor neurons in the ventral cord, the retrovesicular ganglion and in head neurons such as the SMD, RMD motor neurons, the AVA and AVE command interneurons and the SAA neurons. Also expressed in a small number of glutamatergic neurons including the pharyngeal neurons MI and M3, the PLM neurons and a pair of neurons in the lateral ganglion.

The protein resides in the cell membrane. Functionally, acetylcholine-gated chloride channel subunit. Forms functional homopentameric (in vitro) and functional heteropentameric ion channels with acc-3 and acc-4 ion channel subunits. Currents in channels are triggered in response to acetylcholine, but not in response to GABA, glutamate, glycine, histamine or dopamine. This chain is Acetylcholine-gated chloride channel subunit acc-1, found in Caenorhabditis elegans.